A 678-amino-acid chain; its full sequence is Probable metal-nicotianamine transporter YSL6 (678 aa).

Transmembrane regions (helical) follow at residues 41 to 61 (VTVR…LITH), 65 to 85 (LTVG…YFLV), 113 to 133 (CVVA…MLAM), 158 to 178 (LGWM…SLVA), 226 to 246 (ISFF…SCGF), 279 to 299 (IVNC…WPYI), 324 to 344 (VFIS…KIIY), 394 to 414 (LAGS…PMIF), 419 to 439 (WYLV…NSYG), 467 to 487 (GGVI…STAA), 512 to 532 (IGTT…WTAF), 561 to 581 (SALP…AILI), 606 to 626 (FYIG…LFVW), and 641 to 661 (IASG…ILSI).

This sequence belongs to the YSL (TC 2.A.67.2) family. Expressed in roots and leaves.

It is found in the membrane. In terms of biological role, may be involved in the transport of nicotianamine-chelated metals. The sequence is that of Probable metal-nicotianamine transporter YSL6 (YSL6) from Oryza sativa subsp. japonica (Rice).